The primary structure comprises 510 residues: MTDAVQNETVQEASAQEENKLIAERRAKLDQIRKSCKANGHPNDFRRDSLAGDLQKEFGEKSKEELEALNHVVAIAGRVMAKRGPFLVIQETSGRIQAYADKDVQKVLKDKYQGLDIGDIIGVKGALHKSGKGDLYVNMEEYELLTKALRPLPEKFHGLTDQEMRYRQRYVDLIVNEDSRNAFVVRSKVMSAIRNFMISKQFMEVETPMMHVIPGGASARPFITHHNALDMPMYLRIAPELYLKRLVVGGFDRVFEINRNFRNEGLSPRHNPEFTMMEFYMAYADYKDLMDLTEELLSSVALEVLGSTSMPYGEHTVEFGGTYTRMSMFEAIKHYNPDHAQIQALTEEDIQNRDLMVSIAKSVHVEVEPFWTCGQLLEEIFGETAEPKLMQPTFITGYPADISPLARRSDDNPFFTDRFEFFIGGREVANGFSELNDAEDQDARFKAQVEAKESGDDEAMFYDADYITALEHGLPPTAGQGIGIDRLVMLLTNTHTIRDVILFPAMRPQA.

Glutamate 420 and glutamate 427 together coordinate Mg(2+).

This sequence belongs to the class-II aminoacyl-tRNA synthetase family. Homodimer. The cofactor is Mg(2+).

The protein localises to the cytoplasm. The enzyme catalyses tRNA(Lys) + L-lysine + ATP = L-lysyl-tRNA(Lys) + AMP + diphosphate. This Vibrio vulnificus (strain YJ016) protein is Lysine--tRNA ligase.